Here is a 1254-residue protein sequence, read N- to C-terminus: Zinc finger protein BRUTUS (1254 aa).

The disordered stretch occupies residues 1 to 40 (MATPLPDFETARGGGAVASSSTTVLPSSVSSSSSSSRPLP). Low complexity predominate over residues 19–40 (SSSTTVLPSSVSSSSSSSRPLP). Residues 201–221 (FLCSIPVNMLAVFLPWISSSI) traverse the membrane as a helical segment. The tract at residues 893 to 913 (GSPDSSSTETSKPSPQKDNDH) is disordered. A compositionally biased stretch (polar residues) spans 895 to 906 (PDSSSTETSKPS). A CHY-type zinc finger spans residues 999 to 1068 (PEKQIYGCEH…PICTTPSCDG (70 aa)). The Zn(2+) site is built by Cys1006, His1008, Cys1019, Cys1020, Cys1026, Cys1029, His1030, His1036, Cys1048, Cys1051, Cys1061, Cys1066, Cys1076, Cys1079, His1090, Cys1091, Cys1094, Cys1097, His1109, Cys1110, Cys1113, Cys1116, His1124, and Cys1126. The CTCHY-type zinc-finger motif lies at 1071–1134 (MAKHYCSICK…KCLEKSLETN (64 aa)). An RING-type; atypical zinc finger spans residues 1135–1176 (CPICCEFLFTSSEAVRALPCGHYMHSACFQAYTCSHYTCPIC).

In terms of assembly, interacts with the PYEL proteins bHLH115, bHLH104 and ILR3 in the nucleus. Binds zinc and iron ions. As to expression, expressed in cotyledons of seedlings, young leaves, developing and mature embryos, and other reproductive tissues including floral vasculature, funiculus, septum, and gynoecium valves.

The protein resides in the membrane. The protein localises to the nucleus. Its pathway is protein modification; protein ubiquitination. Functionally, essential protein. Negatively regulates the response to iron deficiency and thus contributes to iron homeostasis. Exhibits E3 ubiquitin-protein ligase activity in vitro. Plays a role in root growth, rhizosphere acidification, and iron reductase activity in response to iron deprivation. Facilitates 26S proteasome-mediated degradation of PYEL proteins in the absence of iron. This chain is Zinc finger protein BRUTUS, found in Arabidopsis thaliana (Mouse-ear cress).